Consider the following 553-residue polypeptide: Putative transport protein ASA_0825 (553 aa).

The next 5 helical transmembrane spans lie at isoleucine 4–tryptophan 24, valine 29–valine 49, phenylalanine 65–serine 85, glycine 95–phenylalanine 115, and methionine 158–valine 178. RCK C-terminal domains lie at aspartate 191–glutamate 276 and glutamate 279–asparagine 361. A run of 6 helical transmembrane segments spans residues methionine 371–leucine 391, alanine 403–phenylalanine 425, isoleucine 439–isoleucine 459, alanine 465–alanine 485, tyrosine 493–alanine 513, and leucine 533–valine 553.

The protein belongs to the AAE transporter (TC 2.A.81) family. YidE subfamily.

It localises to the cell membrane. The protein is Putative transport protein ASA_0825 of Aeromonas salmonicida (strain A449).